The primary structure comprises 711 residues: Polyribonucleotide nucleotidyltransferase (711 aa).

The Mg(2+) site is built by D491 and D497. One can recognise a KH domain in the interval 559–618 (PRLITIKINPEKIRDVIGKGGAVIRALTEETGTQIDISDEGVVTIASVDAAAGQEAKRRI). Residues 628–696 (GKIYEGTVLK…DRGRLKLSMK (69 aa)) enclose the S1 motif domain.

This sequence belongs to the polyribonucleotide nucleotidyltransferase family. Mg(2+) is required as a cofactor.

It localises to the cytoplasm. It carries out the reaction RNA(n+1) + phosphate = RNA(n) + a ribonucleoside 5'-diphosphate. Involved in mRNA degradation. Catalyzes the phosphorolysis of single-stranded polyribonucleotides processively in the 3'- to 5'-direction. The chain is Polyribonucleotide nucleotidyltransferase from Janthinobacterium sp. (strain Marseille) (Minibacterium massiliensis).